We begin with the raw amino-acid sequence, 1012 residues long: Structural polyprotein (1012 aa).

A divalent metal cation is bound at residue D30. The 243-residue stretch at 513–755 (ADKGYEVVAN…AGRQYHLAMA (243 aa)) folds into the Peptidase S50 domain. The Nucleophile role is filled by S652. K692 is a catalytic residue. A disordered region spans residues 969–1012 (AMEMKHRNPRRALPKPKPKPNAPTQRPPGRLGRWIRTVSDEDLE). Residues 975-986 (RNPRRALPKPKP) are compositionally biased toward basic residues. The interaction with VP1 protein stretch occupies residues 1003-1012 (IRTVSDEDLE).

Homotrimer. A central divalent metal stabilizes the VP2 trimer. Interacts with host ITGA4/ITGB1. As to quaternary structure, homodimer. Interacts (via C-terminus) with VP1 in the cytoplasm. Interacts with VP2. In terms of processing, specific enzymatic cleavages yield mature proteins. The capsid assembly seems to be regulated by polyprotein processing. The protease VP4 cleaves itself off the polyprotein, thus releasing pre-VP2 and VP3 within the infected cell. During capsid assembly, the C-terminus of pre-VP2 is further processed by VP4, giving rise to VP2, the external capsid protein and three small peptides that all stay closely associated with the capsid.

The protein resides in the virion. It is found in the host cytoplasm. Functionally, capsid protein VP2 self assembles to form an icosahedral capsid with a T=13 symmetry, about 70 nm in diameter, and consisting of 260 VP2 trimers. The capsid encapsulates the genomic dsRNA. VP2 is also involved in attachment and entry into the host cell by interacting with host ITGA4/ITGB1. The precursor of VP2 plays an important role in capsid assembly. First, pre-VP2 and VP2 oligomers assemble to form a procapsid. Then, the pre-VP2 intermediates may be processed into VP2 proteins by proteolytic cleavage mediated by VP4 to obtain the mature virion. The final capsid is composed of pentamers and hexamers but VP2 has a natural tendency to assemble into all-pentameric structures. Therefore pre-VP2 may be required to allow formation of the hexameric structures. In terms of biological role, protease VP4 is a serine protease that cleaves the polyprotein into its final products. Pre-VP2 is first partially cleaved, and may be completely processed by VP4 upon capsid maturation. Its function is as follows. Capsid protein VP3 plays a key role in virion assembly by providing a scaffold for the capsid made of VP2. May self-assemble to form a T=4-like icosahedral inner-capsid composed of at least 180 trimers. Plays a role in genomic RNA packaging by recruiting VP1 into the capsid and interacting with the dsRNA genome segments to form a ribonucleoprotein complex. Additionally, the interaction of the VP3 C-terminal tail with VP1 removes the inherent structural blockade of the polymerase active site. Thus, VP3 can also function as a transcriptional activator. Functionally, structural peptide 1 is a small peptide derived from pre-VP2 C-terminus. It destabilizes and perforates cell membranes, suggesting a role during entry. Structural peptide 2 is a small peptide derived from pVP2 C-terminus. It is not essential for the virus viability, but viral growth is affected when missing. In terms of biological role, structural peptide 3 is a small peptide derived from pVP2 C-terminus. It is not essential for the virus viability, but viral growth is affected when missing. Its function is as follows. Structural peptide 4 is a small peptide derived from pVP2 C-terminus. It is essential for the virus viability. The polypeptide is Structural polyprotein (Avian infectious bursal disease virus (strain Cu-1) (IBDV)).